The following is a 766-amino-acid chain: Protein translocase subunit SecA 2 (766 aa).

Residues Gln84, 102–106 (GEGKT), and Asp490 each bind ATP.

The protein belongs to the SecA family. Monomer and homodimer. Part of the essential Sec protein translocation apparatus which comprises SecA, SecYEG and auxiliary proteins SecDF. Other proteins may also be involved.

It is found in the cell membrane. It localises to the cytoplasm. The enzyme catalyses ATP + H2O + cellular proteinSide 1 = ADP + phosphate + cellular proteinSide 2.. Its function is as follows. Part of the Sec protein translocase complex. Interacts with the SecYEG preprotein conducting channel. Has a central role in coupling the hydrolysis of ATP to the transfer of proteins into and across the cell membrane, serving as an ATP-driven molecular motor driving the stepwise translocation of polypeptide chains across the membrane. The chain is Protein translocase subunit SecA 2 from Thermobifida fusca (strain YX).